We begin with the raw amino-acid sequence, 631 residues long: MSATKLTRREQRAQAQHFIDTLEGSAFPNSKRIYITATQPGVRVPMREIQLSPTLIGGSKEQPQYEENEAIPVYDTSGPYGDPQIAINVQQGLAKLRQPWIDARGDTEELTVRSSDYTKARLADDGLDELRFSGVLTPKRAKAGRRVTQLHYARQGIITPEMEFIAIRENMGRERIRSEVLRHQHPGMSFGARLPENITAEFVRDEVAAGRAIIPANINHPESEPMIIGRNFLVKVNANIGNSAVTSSIEEEVEKLVWSTRWGADTVMDLSTGRYIHETREWILRNSPVPIGTVPIYQALEKVNGIAEDLTWEVFRDTLLEQAEQGVDYFTIHAGVLLRYVPMTAKRLTGIVSRGGSIMAKWCLSHHQENFLYQHFREICEICAAYDVSLSLGDGLRPGSIQDANDEAQFAELHTLGELTKIAWEYDVQVMIEGPGHVPMQMIRRNMTEELEHCHEAPFYTLGPLTTDIAPGYDHFTSGIGAAMIGWFGCAMLCYVTPKEHLGLPNKEDVKQGLITYKIAAHAADLAKGHPGAQIRDNAMSKARFEFRWEDQFNLALDPFTARAYHDETLPQESGKVAHFCSMCGPKFCSMKISQEVRDYAAAQTIEVGMADMSENFRARGGEIYLRKEEA.

Substrate-binding positions include Asn-239, Met-268, Tyr-297, His-333, 353-355, 394-397, and Glu-433; these read SRG and DGLR. His-437 is a Zn(2+) binding site. Residue Tyr-460 coordinates substrate. Zn(2+) is bound at residue His-501. The [4Fe-4S] cluster site is built by Cys-581, Cys-584, and Cys-589.

The protein belongs to the ThiC family. Homodimer. The cofactor is [4Fe-4S] cluster.

The enzyme catalyses 5-amino-1-(5-phospho-beta-D-ribosyl)imidazole + S-adenosyl-L-methionine = 4-amino-2-methyl-5-(phosphooxymethyl)pyrimidine + CO + 5'-deoxyadenosine + formate + L-methionine + 3 H(+). It functions in the pathway cofactor biosynthesis; thiamine diphosphate biosynthesis. Its function is as follows. Catalyzes the synthesis of the hydroxymethylpyrimidine phosphate (HMP-P) moiety of thiamine from aminoimidazole ribotide (AIR) in a radical S-adenosyl-L-methionine (SAM)-dependent reaction. The chain is Phosphomethylpyrimidine synthase from Escherichia coli O6:H1 (strain CFT073 / ATCC 700928 / UPEC).